The following is a 265-amino-acid chain: Small ribosomal subunit protein uS2 (265 aa).

Belongs to the universal ribosomal protein uS2 family.

The protein is Small ribosomal subunit protein uS2 of Ligilactobacillus salivarius (strain UCC118) (Lactobacillus salivarius).